The chain runs to 260 residues: Ribose-5-phosphate isomerase (260 aa).

This sequence belongs to the ribose 5-phosphate isomerase family.

The protein resides in the cytoplasm. The catalysed reaction is aldehydo-D-ribose 5-phosphate = D-ribulose 5-phosphate. Its pathway is carbohydrate degradation; pentose phosphate pathway; D-ribose 5-phosphate from D-ribulose 5-phosphate (non-oxidative stage): step 1/1. This chain is Ribose-5-phosphate isomerase (RKI1), found in Candida glabrata (strain ATCC 2001 / BCRC 20586 / JCM 3761 / NBRC 0622 / NRRL Y-65 / CBS 138) (Yeast).